The following is a 606-amino-acid chain: Elongation factor 4 (606 aa).

Positions 10 to 192 (KNIRNFSIIA…ALVARVPPPQ (183 aa)) constitute a tr-type G domain. Residues 22-27 (DHGKST) and 139-142 (NKID) contribute to the GTP site.

The protein belongs to the TRAFAC class translation factor GTPase superfamily. Classic translation factor GTPase family. LepA subfamily.

It is found in the cell inner membrane. It catalyses the reaction GTP + H2O = GDP + phosphate + H(+). Required for accurate and efficient protein synthesis under certain stress conditions. May act as a fidelity factor of the translation reaction, by catalyzing a one-codon backward translocation of tRNAs on improperly translocated ribosomes. Back-translocation proceeds from a post-translocation (POST) complex to a pre-translocation (PRE) complex, thus giving elongation factor G a second chance to translocate the tRNAs correctly. Binds to ribosomes in a GTP-dependent manner. This is Elongation factor 4 from Nitrosococcus oceani (strain ATCC 19707 / BCRC 17464 / JCM 30415 / NCIMB 11848 / C-107).